The following is a 346-amino-acid chain: MMKATPIALLLAGVLASPLCAAGLDARLTLVEGSTDDVRVNLTLTNTGEKPVRLLKWQLPGSEDAPLFQVERDGQPVDYEGALIKRAAPSDKDYQLLKAGQSLTVQAEVSGLYDMSAQGQYSIRYLLPTVAQEGKAAKAKQAQASESNAVTLWVDGVSDDRVLAKAAVAEPQAVSASVSFSGRCTNTQKSDILAALDAASGIANNSSSYLAVDKPNGQRYRSWFGAYDATRWNQAETNFSKIKDAIDNKPLTFDCGCKQSYFAYVYPDQPYKVYLCKSFWTAPVTGTDSRAGTIVHELSHFNVVAGTDDLGYGQANARNLASTDPQKALNNADNHEYFAENTPSEN.

The N-terminal stretch at 1–21 is a signal peptide; sequence MMKATPIALLLAGVLASPLCA. H296 provides a ligand contact to Zn(2+). E297 is an active-site residue. Zn(2+)-binding residues include H300 and D309.

The protein belongs to the peptidase M35 family. Requires Zn(2+) as cofactor.

Heat-labile protease. This Aeromonas hydrophila protein is Extracellular protease.